A 746-amino-acid polypeptide reads, in one-letter code: Serine/threonine-protein kinase SMU1 (746 aa).

Disordered regions lie at residues 1-138 (MSLV…DTLH) and 155-212 (QRSH…GSRN). 2 stretches are compositionally biased toward low complexity: residues 15 to 54 (SSAN…SSTT) and 85 to 105 (SVSS…PSSA). 3 stretches are compositionally biased toward polar residues: residues 106-121 (LPWS…STAT), 128-138 (RSNTAGPDTLH), and 156-176 (RSHS…SSPT). Residues 194–203 (PSRDRERSRD) show a composition bias toward basic and acidic residues. Residues 237 to 250 (ISTPYDPVHLTHVG) enclose the CRIB domain. A disordered region spans residues 301 to 451 (GGSDVWKKMG…RRETKKSTIK (151 aa)). Polar residues predominate over residues 370–380 (PPSNASTSSAD). Residues 414–430 (SPASRAPDAPAAVSAAS) are compositionally biased toward low complexity. The region spanning 472-723 (YRSLQKIGQG…ALGMLAHPFL (252 aa)) is the Protein kinase domain. ATP is bound by residues 478–486 (IGQGASGGV) and lysine 501. Residue aspartate 591 is the Proton acceptor of the active site.

The protein belongs to the protein kinase superfamily. STE Ser/Thr protein kinase family. STE20 subfamily.

The protein resides in the cytoplasm. The protein localises to the nucleus. It catalyses the reaction L-seryl-[protein] + ATP = O-phospho-L-seryl-[protein] + ADP + H(+). The catalysed reaction is L-threonyl-[protein] + ATP = O-phospho-L-threonyl-[protein] + ADP + H(+). Its function is as follows. MAP4K component of the MAPK pathway required for the mating pheromone response and the regulation of cell polarity and cell cycle. Phosphorylates histone H2B to form H2BS10ph. The protein is Serine/threonine-protein kinase SMU1 (SMU1) of Mycosarcoma maydis (Corn smut fungus).